We begin with the raw amino-acid sequence, 62 residues long: Cytotoxin 11 (62 aa).

Cystine bridges form between C3–C22, C15–C40, C44–C55, and C56–C61.

It belongs to the three-finger toxin family. Short-chain subfamily. Orphan group XV sub-subfamily. Expressed by the venom gland.

Its subcellular location is the secreted. It localises to the target cell membrane. In terms of biological role, has low cytotoxic activity. The protein is Cytotoxin 11 of Naja annulifera (Banded Egyptian cobra).